Here is a 727-residue protein sequence, read N- to C-terminus: Transcription activator of gluconeogenesis TRV_01442 (727 aa).

Positions 1–32 (MSPHQTTGQESDNMTVNGENAQASSQYIQSNE) are enriched in polar residues. Residues 1–62 (MSPHQTTGQE…PSRPKRKKAK (62 aa)) are disordered. A compositionally biased stretch (basic and acidic residues) spans 39–55 (ATEKKASAAKAAKDPSR). The segment at residues 65–93 (CYACQRGHLTCGDERPCQRCIKRGFQDAC) is a DNA-binding region (zn(2)-C6 fungal-type). 3 stretches are compositionally biased toward polar residues: residues 129 to 213 (NNVN…TPSA), 267 to 277 (PSDSGAQRGSI), and 361 to 379 (MMTTSSATFEDTTNSGAFN). 5 disordered regions span residues 129–224 (NNVN…FNST), 264–297 (DTPPSDSGAQRGSIGQNGSGTFGLTGSSFSESPS), 353–399 (SPAS…STPQ), 533–567 (NHNVNTGGSSGLMTGSTSRGSYTPRPYSSEVYNSS), and 627–666 (GSNGEADAGLNGEATSNETNELNGSHTNGATTNGRGQRRW). Composition is skewed to low complexity over residues 380–399 (SRQNVPVSQQRQQPVVSTPQ) and 543–553 (GLMTGSTSRGS). The span at 639 to 661 (EATSNETNELNGSHTNGATTNGR) shows a compositional bias: polar residues.

Belongs to the ERT1/acuK family.

Its subcellular location is the nucleus. Its function is as follows. Transcription factor which regulates nonfermentable carbon utilization. Activator of gluconeogenetic genes. This chain is Transcription activator of gluconeogenesis TRV_01442, found in Trichophyton verrucosum (strain HKI 0517).